The sequence spans 348 residues: Farnesoic acid carboxyl-O-methyltransferase (348 aa).

Residue Tyr16 coordinates S-adenosyl-L-methionine. Substrate is bound by residues Tyr16 and 19-23; that span reads HSKYQ. Residues Gly57, 57-58, Asn63, 94-97, 123-125, and 140-142 each bind S-adenosyl-L-methionine; these read GC, FNDS, SFF, and SYS. 141–145 is a substrate binding site; it reads YSLHF. Asn162, Asp247, and Phe249 together coordinate Mg(2+).

It belongs to the methyltransferase superfamily. SABATH family. Homodimer. It depends on Mg(2+) as a cofactor. In terms of tissue distribution, mostly expressed in leaves and, at very low levels, in roots, stems, flowers and siliques.

The enzyme catalyses (2E,6E)-farnesoate + S-adenosyl-L-methionine = methyl (2E,6E)-farnesoate + S-adenosyl-L-homocysteine. It catalyses the reaction juvenile hormone III carboxylate + S-adenosyl-L-methionine = juvenile hormone III + S-adenosyl-L-homocysteine. It functions in the pathway sesquiterpene biosynthesis. With respect to regulation, activated by Mn(2+) ions. Strongly inhibited by Cu(2+), Zn(2+), Fe(3+) and Fe(2+) ions. Moderately inhibited by Na(+) and Ca(2+) ions. Rapidly degraded at temperatures above 40 degrees Celsius. Its function is as follows. May catalyze the production of the insect juvenile hormone methyl farnesoate (MeFA) to trigger defense against insect herbivory. This Arabidopsis thaliana (Mouse-ear cress) protein is Farnesoic acid carboxyl-O-methyltransferase.